The primary structure comprises 511 residues: Trigger factor (511 aa).

The 86-residue stretch at 168-253 (GDLLTIDFVG…VKEVKAPAEV (86 aa)) folds into the PPIase FKBP-type domain. The interval 446–511 (DEHEHHHHDH…KAPAKKKKED (66 aa)) is disordered. The span at 455 to 478 (HDHDHDHDHDHDHGHDHDHGDEKP) shows a compositional bias: basic and acidic residues. The segment covering 479–488 (KKKPAAKKAA) has biased composition (basic residues). Basic and acidic residues predominate over residues 489–498 (AKSDDGEAKP). Over residues 499–511 (AAKKAPAKKKKED) the composition is skewed to basic residues.

This sequence belongs to the FKBP-type PPIase family. Tig subfamily.

It is found in the cytoplasm. It carries out the reaction [protein]-peptidylproline (omega=180) = [protein]-peptidylproline (omega=0). In terms of biological role, involved in protein export. Acts as a chaperone by maintaining the newly synthesized protein in an open conformation. Functions as a peptidyl-prolyl cis-trans isomerase. In Parvibaculum lavamentivorans (strain DS-1 / DSM 13023 / NCIMB 13966), this protein is Trigger factor.